The following is a 526-amino-acid chain: ATP synthase subunit alpha (526 aa).

An ATP-binding site is contributed by 171 to 178 (GDRQTGKT).

It belongs to the ATPase alpha/beta chains family. In terms of assembly, F-type ATPases have 2 components, CF(1) - the catalytic core - and CF(0) - the membrane proton channel. CF(1) has five subunits: alpha(3), beta(3), gamma(1), delta(1), epsilon(1). CF(0) has four main subunits: a(1), b(1), b'(1) and c(9-12).

It is found in the cell inner membrane. The enzyme catalyses ATP + H2O + 4 H(+)(in) = ADP + phosphate + 5 H(+)(out). Functionally, produces ATP from ADP in the presence of a proton gradient across the membrane. The alpha chain is a regulatory subunit. This is ATP synthase subunit alpha from Chlorobaculum tepidum (strain ATCC 49652 / DSM 12025 / NBRC 103806 / TLS) (Chlorobium tepidum).